The chain runs to 218 residues: Probable septum site-determining protein MinC (218 aa).

Belongs to the MinC family. As to quaternary structure, interacts with MinD and FtsZ.

Functionally, cell division inhibitor that blocks the formation of polar Z ring septums. Rapidly oscillates between the poles of the cell to destabilize FtsZ filaments that have formed before they mature into polar Z rings. Prevents FtsZ polymerization. The sequence is that of Probable septum site-determining protein MinC from Moorella thermoacetica (strain ATCC 39073 / JCM 9320).